A 322-amino-acid polypeptide reads, in one-letter code: Cytochrome c biogenesis protein CcsA (322 aa).

7 helical membrane-spanning segments follow: residues 9 to 29, 44 to 64, 68 to 88, 143 to 163, 226 to 246, 260 to 274, and 289 to 309; these read ILTH…LITL, GMIV…VSSG, LSNL…LHTI, MLLS…ILII, IISL…VWAN, TWAF…IYLH, and IASI…LLGI.

The protein belongs to the CcmF/CycK/Ccl1/NrfE/CcsA family. As to quaternary structure, may interact with Ccs1.

The protein localises to the plastid. Its subcellular location is the chloroplast thylakoid membrane. Functionally, required during biogenesis of c-type cytochromes (cytochrome c6 and cytochrome f) at the step of heme attachment. The chain is Cytochrome c biogenesis protein CcsA from Hordeum vulgare (Barley).